The sequence spans 139 residues: Arsenate reductase (139 aa).

Active-site nucleophile residues include Cys-10, Cys-82, and Cys-89. Cystine bridges form between Cys-10–Cys-82 and Cys-82–Cys-89.

This sequence belongs to the low molecular weight phosphotyrosine protein phosphatase family. Thioredoxin-coupled ArsC subfamily.

It localises to the cytoplasm. It catalyses the reaction arsenate + [thioredoxin]-dithiol + H(+) = arsenite + [thioredoxin]-disulfide + H2O. Its function is as follows. Catalyzes the reduction of arsenate [As(V)] to arsenite [As(III)]. This chain is Arsenate reductase, found in Halalkalibacterium halodurans (strain ATCC BAA-125 / DSM 18197 / FERM 7344 / JCM 9153 / C-125) (Bacillus halodurans).